Here is a 301-residue protein sequence, read N- to C-terminus: Triplex capsid protein 2 (301 aa).

This sequence belongs to the herpesviridae TRX2 protein family. Interacts with TRX1 and major capisd protein/MCP.

The protein resides in the virion. It localises to the host nucleus. In terms of biological role, structural component of the T=16 icosahedral capsid. The capsid is composed of pentamers and hexamers of major capsid protein/MCP, which are linked together by heterotrimers called triplexes. These triplexes are formed by a single molecule of triplex protein 1/TRX1 and two copies of triplex protein 2/TRX2. Additionally, TRX1 is required for efficient transport of TRX2 to the nucleus, which is the site of capsid assembly. The sequence is that of Triplex capsid protein 2 from Homo sapiens (Human).